Here is a 493-residue protein sequence, read N- to C-terminus: Glutamyl-tRNA(Gln) amidotransferase subunit A (493 aa).

Catalysis depends on charge relay system residues lysine 79 and serine 159. The active-site Acyl-ester intermediate is serine 183.

It belongs to the amidase family. GatA subfamily. Heterotrimer of A, B and C subunits.

The catalysed reaction is L-glutamyl-tRNA(Gln) + L-glutamine + ATP + H2O = L-glutaminyl-tRNA(Gln) + L-glutamate + ADP + phosphate + H(+). Functionally, allows the formation of correctly charged Gln-tRNA(Gln) through the transamidation of misacylated Glu-tRNA(Gln) in organisms which lack glutaminyl-tRNA synthetase. The reaction takes place in the presence of glutamine and ATP through an activated gamma-phospho-Glu-tRNA(Gln). This is Glutamyl-tRNA(Gln) amidotransferase subunit A from Rhizobium leguminosarum bv. trifolii (strain WSM2304).